Reading from the N-terminus, the 523-residue chain is Apoptosis inhibitor 5-B (523 aa).

Positions 1–360 (MPTVEELYRN…HQLGRKLPDF (360 aa)) are ARM-like and Heat-like helical repeats. The disordered stretch occupies residues 446 to 523 (VQKTDSGQKR…RGNRSRGRIY (78 aa)). Residues 454–475 (KRMSDETSSTSPPKKPVVGPKR) carry the Nuclear localization signal motif. Gly residues predominate over residues 502–515 (GFQGGRGRGWGGRG).

It belongs to the API5 family. Monomer.

The protein localises to the nucleus. Functionally, may be an antiapoptotic factor. In Xenopus laevis (African clawed frog), this protein is Apoptosis inhibitor 5-B (api5-b).